A 250-amino-acid chain; its full sequence is Phosphonates import ATP-binding protein PhnC (250 aa).

Residues 2–247 (IVFNNVNKVW…KLDAQAMKKI (246 aa)) form the ABC transporter domain. ATP is bound at residue 35–42 (GLSGAGKT).

The protein belongs to the ABC transporter superfamily. Phosphonates importer (TC 3.A.1.9.1) family. As to quaternary structure, the complex is composed of two ATP-binding proteins (PhnC), two transmembrane proteins (PhnE) and a solute-binding protein (PhnD).

The protein resides in the cell membrane. The catalysed reaction is phosphonate(out) + ATP + H2O = phosphonate(in) + ADP + phosphate + H(+). In terms of biological role, part of the ABC transporter complex PhnCDE involved in phosphonates import. Responsible for energy coupling to the transport system. In Mycoplasma mycoides subsp. mycoides SC (strain CCUG 32753 / NCTC 10114 / PG1), this protein is Phosphonates import ATP-binding protein PhnC.